The chain runs to 131 residues: Small ribosomal subunit protein uS11 (131 aa).

It belongs to the universal ribosomal protein uS11 family. In terms of assembly, part of the 30S ribosomal subunit. Interacts with proteins S7 and S18. Binds to IF-3.

Located on the platform of the 30S subunit, it bridges several disparate RNA helices of the 16S rRNA. Forms part of the Shine-Dalgarno cleft in the 70S ribosome. This is Small ribosomal subunit protein uS11 from Deinococcus geothermalis (strain DSM 11300 / CIP 105573 / AG-3a).